We begin with the raw amino-acid sequence, 183 residues long: V-type ATP synthase subunit E (183 aa).

It belongs to the V-ATPase E subunit family.

Produces ATP from ADP in the presence of a proton gradient across the membrane. This Fusobacterium nucleatum subsp. nucleatum (strain ATCC 25586 / DSM 15643 / BCRC 10681 / CIP 101130 / JCM 8532 / KCTC 2640 / LMG 13131 / VPI 4355) protein is V-type ATP synthase subunit E.